The sequence spans 243 residues: tRNA (guanine-N(1)-)-methyltransferase (243 aa).

S-adenosyl-L-methionine-binding positions include glycine 113 and 133-138; that span reads IGDFVL.

The protein belongs to the RNA methyltransferase TrmD family. Homodimer.

It localises to the cytoplasm. It carries out the reaction guanosine(37) in tRNA + S-adenosyl-L-methionine = N(1)-methylguanosine(37) in tRNA + S-adenosyl-L-homocysteine + H(+). In terms of biological role, specifically methylates guanosine-37 in various tRNAs. The sequence is that of tRNA (guanine-N(1)-)-methyltransferase from Bacillus velezensis (strain DSM 23117 / BGSC 10A6 / LMG 26770 / FZB42) (Bacillus amyloliquefaciens subsp. plantarum).